Consider the following 134-residue polypeptide: Syncollin (134 aa).

The N-terminal stretch at 1–21 is a signal peptide; sequence MSPLCLLLLALALVAVPGARG.

As to quaternary structure, monomer and homooligomer; most probably hexameric. Interacts with GP2. According to PubMed:10753942 interaction with syntaxins shown in PubMed:9244306 is physiologically questionable. Post-translationally, contains intrachain disulfide bonds. As to expression, specifically expressed in pancreas and also detected in secretory granules of parotid gland (at protein level). Expressed in pancreas, spleen, small intestine, lung and neutrophilic granulocytes (at protein level). Expressed by epithelial cells in duodenum and colon.

It localises to the zymogen granule membrane. The protein resides in the zymogen granule lumen. Functionally, functions in exocytosis in pancreatic acinar cells regulating the fusion of zymogen granules with each other. May have a pore-forming activity on membranes and regulate exocytosis in other exocrine tissues. The protein is Syncollin (Sycn) of Rattus norvegicus (Rat).